We begin with the raw amino-acid sequence, 432 residues long: Pachytene checkpoint protein 2 homolog (432 aa).

The residue at position 1 (Met-1) is an N-acetylmethionine. Gly-179–Thr-186 is a binding site for ATP.

It belongs to the AAA ATPase family. PCH2 subfamily. Specifically interacts with the ligand binding domain of the thyroid receptor (TR). This interaction does not require the presence of thyroid hormone for its interaction. Interacts with proteasome subunit PSMA8; to participate in meiosis progression during spermatogenesis.

Plays a key role in chromosome recombination and chromosome structure development during meiosis. Required at early steps in meiotic recombination that leads to non-crossovers pathways. Also needed for efficient completion of homologous synapsis by influencing crossover distribution along the chromosomes affecting both crossovers and non-crossovers pathways. Also required for development of higher-order chromosome structures and is needed for synaptonemal-complex formation. In males, required for efficient synapsis of the sex chromosomes and for sex body formation. Promotes early steps of the DNA double-strand breaks (DSBs) repair process upstream of the assembly of RAD51 complexes. Required for depletion of HORMAD1 and HORMAD2 from synapsed chromosomes. Plays a role in mitotic spindle assembly checkpoint (SAC) activation. The polypeptide is Pachytene checkpoint protein 2 homolog (Trip13) (Rattus norvegicus (Rat)).